A 93-amino-acid chain; its full sequence is UPF0213 protein CPE1444 (93 aa).

The GIY-YIG domain maps to 1–75 (MNYVYILKCK…KKLTRNQKLQ (75 aa)).

This sequence belongs to the UPF0213 family.

This Clostridium perfringens (strain 13 / Type A) protein is UPF0213 protein CPE1444.